Consider the following 218-residue polypeptide: Putative glutamine transport system permease protein GlnP (218 aa).

In terms of domain architecture, ABC transmembrane type-1 spans 19 to 208 (TLVTLKYSII…ILVMLISFIA (190 aa)). 4 helical membrane-spanning segments follow: residues 25 to 45 (YSIIAVILGLVIGMLLAICKV), 57 to 79 (FYTSIFRGTPLLVQLSIIYFAAP), 86 to 108 (FSVFMAGVISFALNSGAYVSEVI), and 187 to 207 (FFPMLIAACCYYILVMLISFI).

The protein belongs to the binding-protein-dependent transport system permease family. HisMQ subfamily.

The protein localises to the cell inner membrane. Functionally, part of the binding-protein-dependent transport system for glutamine; probably responsible for the translocation of the substrate across the membrane. The protein is Putative glutamine transport system permease protein GlnP (glnP) of Rickettsia typhi (strain ATCC VR-144 / Wilmington).